The sequence spans 274 residues: Kit ligand (274 aa).

The first 25 residues, 1–25 (MKKTQTWIITCIYLQLLLFNPLVHT), serve as a signal peptide directing secretion. Position 26 is a pyrrolidone carboxylic acid (Gln26). Over 26 to 215 (QGICSNRVTD…SNSIEDSSLQ (190 aa)) the chain is Extracellular. 2 disulfides stabilise this stretch: Cys29/Cys114 and Cys68/Cys164. Residues Asn90, Asn145, and Asn196 are each glycosylated (N-linked (GlcNAc...) asparagine). A helical membrane pass occupies residues 216 to 238 (WAAVALPAFFSLVIGFAFGAFYW). Residues 239–274 (KKKQPNLTRTVENRQINEEDNEISMLQEKEREFQEV) lie on the Cytoplasmic side of the membrane.

It belongs to the SCF family. As to quaternary structure, homodimer, non-covalently linked. Post-translationally, a soluble form is produced by proteolytic processing of isoform 1 in the extracellular domain.

The protein localises to the cell membrane. It localises to the cytoplasm. The protein resides in the cytoskeleton. It is found in the cell projection. Its subcellular location is the lamellipodium. The protein localises to the filopodium. It localises to the secreted. Its function is as follows. Stimulates the proliferation of mast cells. Able to augment the proliferation of both myeloid and lymphoid hematopoietic progenitors in bone marrow culture. Also mediates cell-cell adhesion. Acts synergistically with other cytokines, probably interleukins. The protein is Kit ligand (KITLG) of Bos taurus (Bovine).